The chain runs to 115 residues: UPF0127 protein PH1112 (115 aa).

It belongs to the UPF0127 family.

In Pyrococcus horikoshii (strain ATCC 700860 / DSM 12428 / JCM 9974 / NBRC 100139 / OT-3), this protein is UPF0127 protein PH1112.